Here is a 319-residue protein sequence, read N- to C-terminus: MLPTTINSLMYIIPILIAVAFLTLMERKMLGYMQLRKGPNITGPYGLLQPIADGLKLFTKEPIRPLHTSPTLLISSPILALTTAMLIWTPIPMPYALTNLNLGLLSILAISSMAVNSILWAGWASNSKYAIIGSLRAVAQTISYEVTLGIILLSILILTGGFTMQLLTTTQEFTWLLTTSWPLAMMWFISTLAETNRAPFDLTEGESELVSGFNVEYAGGPFALFFLTEYANIIVMNLLTCILFISPGPPQHPELFLINLITKTMILSLSFLWIRASYPSFRYDQLMHLLWKQFLPLTMSLCLLHTSLPISTSGIPPLS.

8 helical membrane passes run Thr-5–Met-25, Leu-72–Pro-92, Leu-102–Gly-122, Val-146–Leu-166, Phe-173–Ala-193, Phe-225–Ile-245, Glu-254–Ile-274, and Leu-295–Ile-315.

Belongs to the complex I subunit 1 family.

It is found in the mitochondrion inner membrane. It catalyses the reaction a ubiquinone + NADH + 5 H(+)(in) = a ubiquinol + NAD(+) + 4 H(+)(out). Its function is as follows. Core subunit of the mitochondrial membrane respiratory chain NADH dehydrogenase (Complex I) that is believed to belong to the minimal assembly required for catalysis. Complex I functions in the transfer of electrons from NADH to the respiratory chain. The immediate electron acceptor for the enzyme is believed to be ubiquinone. This chain is NADH-ubiquinone oxidoreductase chain 1 (MT-ND1), found in Varanus flavescens (Yellow monitor).